The following is a 468-amino-acid chain: Glutamine synthetase (468 aa).

The GS beta-grasp domain occupies 14–98; the sequence is HDVKYVDLRF…ILCDVYEPST (85 aa). The 363-residue stretch at 106–468 folds into the GS catalytic domain; sequence PRGIAKAAEK…PIEYKMYYSV (363 aa). Positions 131 and 133 each coordinate Mg(2+). E209 contacts ATP. The Mg(2+) site is built by E214 and E221. L-glutamate contacts are provided by residues 265–266 and G266; that span reads NG. A Mg(2+)-binding site is contributed by H270. ATP-binding positions include 272-274 and S274; that span reads HQS. L-glutamate-binding residues include R322, E328, and R340. Positions 340, 345, and 353 each coordinate ATP. E358 serves as a coordination point for Mg(2+). Residue R360 participates in L-glutamate binding. The residue at position 398 (Y398) is an O-AMP-tyrosine.

Belongs to the glutamine synthetase family. Oligomer of 12 subunits arranged in the form of two hexameric ring. Requires Mg(2+) as cofactor.

It localises to the cytoplasm. It catalyses the reaction L-glutamate + NH4(+) + ATP = L-glutamine + ADP + phosphate + H(+). The activity of this enzyme could be controlled by adenylation under conditions of abundant glutamine. Functionally, catalyzes the ATP-dependent biosynthesis of glutamine from glutamate and ammonia. The polypeptide is Glutamine synthetase (Azospirillum brasilense).